Reading from the N-terminus, the 76-residue chain is Monocarboxylate transporter 1 (76 aa).

The next 3 helical transmembrane spans lie at 1-18 (LSIL…MGLA), 28-48 (IQYF…LAPL), and 53-73 (IGFC…SSVL). Position 8 (Asp8) interacts with H(+). Residue Arg12 participates in (S)-lactate binding.

It belongs to the major facilitator superfamily. Monocarboxylate porter (TC 2.A.1.13) family. Interacts with BSG; interaction mediates SLC16A1 targeting to the plasma membrane. Interacts with EMB; interaction mediates SLC16A1 targeting to the plasma membrane.

The protein resides in the cell membrane. It localises to the basolateral cell membrane. The protein localises to the apical cell membrane. It catalyses the reaction (S)-lactate(in) + H(+)(in) = (S)-lactate(out) + H(+)(out). It carries out the reaction acetate(out) + H(+)(out) = acetate(in) + H(+)(in). The enzyme catalyses acetoacetate(out) + H(+)(out) = acetoacetate(in) + H(+)(in). The catalysed reaction is pyruvate(out) + H(+)(out) = pyruvate(in) + H(+)(in). It catalyses the reaction (R)-3-hydroxybutanoate(out) + H(+)(out) = (R)-3-hydroxybutanoate(in) + H(+)(in). It carries out the reaction 3-methyl-2-oxobutanoate(out) + H(+)(out) = 3-methyl-2-oxobutanoate(in) + H(+)(in). The enzyme catalyses 4-methyl-2-oxopentanoate(out) + H(+)(out) = 4-methyl-2-oxopentanoate(in) + H(+)(in). The catalysed reaction is succinate(in) + 2 H(+)(in) = succinate(out) + 2 H(+)(out). Bidirectional proton-coupled monocarboxylate transporter. Catalyzes the rapid transport across the plasma membrane of many monocarboxylates such as lactate, pyruvate, acetate and the ketone bodies acetoacetate and beta-hydroxybutyrate, and thus contributes to the maintenance of intracellular pH. The transport direction is determined by the proton motive force and the concentration gradient of the substrate monocarboxylate. MCT1 is a major lactate exporter. Plays a role in cellular responses to a high-fat diet by modulating the cellular levels of lactate and pyruvate that contribute to the regulation of central metabolic pathways and insulin secretion, with concomitant effects on plasma insulin levels and blood glucose homeostasis. Facilitates the protonated monocarboxylate form of succinate export, that its transient protonation upon muscle cell acidification in exercising muscle and ischemic heart. Functions via alternate outward- and inward-open conformation states. Protonation and deprotonation is essential for the conformational transition. The protein is Monocarboxylate transporter 1 (SLC16A1) of Meriones unguiculatus (Mongolian jird).